Reading from the N-terminus, the 376-residue chain is MCANIPEFDSFYENENINYNLESFAPLNCDVNSPFLPINNNDINVNAYGDENLTYSNFLLSYNDKLATTTAKNNSINNSNSNNNSNNNKNNNNNHNNNNLLGNDISQMAFLLDYPSTLNEPQFAVNCKDIYRKDISTPSSLVSSLPPAKFSLSLSNSPSPPPPSSSSLKHGEAIISNTSESSDIFADPNSFEKDTMPLTQELTLENLNNQLNYPDFTINAIEQDPAPSSFSSSSSSSESTVSSSRKRKPCHDSYTHSSPSSSESKKISDSRLSAEGLAKVLNLESPEEALKRERFILGIFQNELNYPLGYKTWIRDTTKEYRTKLINQLHERVKVKYPEYNQSILETIIRRGTYYMMQSRLRRERRMKLKERKRTT.

Low complexity-rich tracts occupy residues 73 to 99 (NNSINNSNSNNNSNNNKNNNNNHNNNN) and 228 to 243 (SSFSSSSSSSESTVSS). Disordered stretches follow at residues 73-100 (NNSINNSNSNNNSNNNKNNNNNHNNNNL) and 222-269 (EQDP…KISD).

This is an uncharacterized protein from Saccharomyces cerevisiae (strain ATCC 204508 / S288c) (Baker's yeast).